The sequence spans 116 residues: Large ribosomal subunit protein uL18 (116 aa).

This sequence belongs to the universal ribosomal protein uL18 family. In terms of assembly, part of the 50S ribosomal subunit; part of the 5S rRNA/L5/L18/L25 subcomplex. Contacts the 5S and 23S rRNAs.

Its function is as follows. This is one of the proteins that bind and probably mediate the attachment of the 5S RNA into the large ribosomal subunit, where it forms part of the central protuberance. The polypeptide is Large ribosomal subunit protein uL18 (Shewanella amazonensis (strain ATCC BAA-1098 / SB2B)).